The sequence spans 611 residues: Probable methyltransferase PMT19 (611 aa).

Over 1–15 (MNPSQQHLPKLCPKR) the chain is Cytoplasmic. Residues 16–36 (LFLFFTPFLLFSLYYILTTIK) form a helical; Signal-anchor for type II membrane protein membrane-spanning segment. Residues 37–611 (TITISSQDRH…TILIVDNSIK (575 aa)) are Lumenal-facing. Asn-68, Asn-97, Asn-289, Asn-408, Asn-411, and Asn-587 each carry an N-linked (GlcNAc...) asparagine glycan.

It belongs to the methyltransferase superfamily.

The protein resides in the endoplasmic reticulum membrane. This is Probable methyltransferase PMT19 from Arabidopsis thaliana (Mouse-ear cress).